Consider the following 274-residue polypeptide: 2-amino-4,5-dihydroxy-6-oxo-7-(phosphonooxy)heptanoate synthase (274 aa).

It belongs to the DeoC/FbaB aldolase family. GriI subfamily. In terms of assembly, homodecamer.

The catalysed reaction is 2-amino-4,5-dihydroxy-6-oxo-7-(phosphooxy)heptanoate = L-aspartate 4-semialdehyde + dihydroxyacetone phosphate. Catalyzes aldol condensation between L-aspartate-4-semialdehyde (ASA) and dihydroxyacetone phosphate (DHAP), to form 2-amino-4,5-dihydroxy-6-oxo-7-(phosphonooxy)heptanoate. The protein is 2-amino-4,5-dihydroxy-6-oxo-7-(phosphonooxy)heptanoate synthase (griI) of Streptomyces griseus subsp. griseus (strain JCM 4626 / CBS 651.72 / NBRC 13350 / KCC S-0626 / ISP 5235).